A 98-amino-acid chain; its full sequence is Beta-2-microglobulin (98 aa).

Positions 4-92 constitute an Ig-like C1-type domain; sequence PKVQVYSRFP…HETLKEPQVY (89 aa). The cysteines at positions 24 and 79 are disulfide-linked.

It belongs to the beta-2-microglobulin family. In terms of assembly, heterodimer of an alpha chain and a beta chain. Beta-2-microglobulin is the beta-chain of major histocompatibility complex class I molecules.

Its subcellular location is the secreted. Component of the class I major histocompatibility complex (MHC). Involved in the presentation of peptide antigens to the immune system. The protein is Beta-2-microglobulin (B2M) of Meleagris gallopavo (Wild turkey).